Consider the following 214-residue polypeptide: Pyridoxine/pyridoxamine 5'-phosphate oxidase (214 aa).

Residues 9-12 (RKDY) and K67 each bind substrate. Residues 62-67 (RMVLLK), 77-78 (FT), R83, K84, and Q106 each bind FMN. Substrate-binding residues include Y124, R128, and S132. Residues 141-142 (QS) and W186 each bind FMN. 192–194 (RLH) contributes to the substrate binding site. R196 serves as a coordination point for FMN.

The protein belongs to the pyridoxamine 5'-phosphate oxidase family. As to quaternary structure, homodimer. FMN is required as a cofactor.

It catalyses the reaction pyridoxamine 5'-phosphate + O2 + H2O = pyridoxal 5'-phosphate + H2O2 + NH4(+). It carries out the reaction pyridoxine 5'-phosphate + O2 = pyridoxal 5'-phosphate + H2O2. Its pathway is cofactor metabolism; pyridoxal 5'-phosphate salvage; pyridoxal 5'-phosphate from pyridoxamine 5'-phosphate: step 1/1. It participates in cofactor metabolism; pyridoxal 5'-phosphate salvage; pyridoxal 5'-phosphate from pyridoxine 5'-phosphate: step 1/1. In terms of biological role, catalyzes the oxidation of either pyridoxine 5'-phosphate (PNP) or pyridoxamine 5'-phosphate (PMP) into pyridoxal 5'-phosphate (PLP). The chain is Pyridoxine/pyridoxamine 5'-phosphate oxidase from Nostoc punctiforme (strain ATCC 29133 / PCC 73102).